An 82-amino-acid polypeptide reads, in one-letter code: U7-hexatoxin-Mg1a (82 aa).

An N-terminal signal peptide occupies residues 1 to 26; sequence MRTIVFLIVSILLLSSAVLMLAEGNA. A propeptide spanning residues 27-44 is cleaved from the precursor; sequence ASHELQEYPIEESLEEQR. 4 disulfides stabilise this stretch: cysteine 46/cysteine 62, cysteine 51/cysteine 67, cysteine 61/cysteine 77, and cysteine 69/cysteine 75. Arginine amide is present on arginine 80.

This sequence belongs to the rTX family. As to expression, expressed by the venom gland.

The protein resides in the secreted. Functionally, induces flaccid paralysis when injected into lepidopteran larvae. Intracranial injection into mice causes awkwardness of movement and laboured respiration until death. The sequence is that of U7-hexatoxin-Mg1a from Macrothele gigas (Japanese funnel web spider).